Here is a 142-residue protein sequence, read N- to C-terminus: Crustacean hyperglycemic hormones (142 aa).

The signal sequence occupies residues 1 to 26; that stretch reads MYSKTIPAMLAIITVAYLCALPHAHA. Position 67 is a pyrrolidone carboxylic acid; partial (Gln67). 3 cysteine pairs are disulfide-bonded: Cys73-Cys109, Cys89-Cys105, and Cys92-Cys118. The residue at position 138 (Val138) is a Valine amide.

The protein belongs to the arthropod CHH/MIH/GIH/VIH hormone family. In terms of processing, the N-terminus is blocked only in isoform CHH-II but not in isoform CHH-I. As to expression, produced by the medulla terminalis X-organ in the eyestalks and transported to the sinus gland where they are stored and released.

It localises to the secreted. In terms of biological role, hormone found in the sinus gland of isopods and decapods which controls the blood sugar level. Has a secretagogue action over the amylase released from the midgut gland. May act as a stress hormone and may be involved in the control of molting and reproduction. The chain is Crustacean hyperglycemic hormones from Carcinus maenas (Common shore crab).